Here is a 151-residue protein sequence, read N- to C-terminus: Probable cGMP 3',5'-cyclic phosphodiesterase subunit delta (151 aa).

This sequence belongs to the PDE6D/unc-119 family. In terms of assembly, interacts with Pde6.

Its subcellular location is the nucleus. It is found in the cytoplasm. The protein is Probable cGMP 3',5'-cyclic phosphodiesterase subunit delta of Drosophila grimshawi (Hawaiian fruit fly).